The primary structure comprises 333 residues: MNRWGLIGASTIAREWVIGAIRATGGEVVSMMSTSAERGAAYATENGIGKSVTSVEELVGDPDVDAVYVSTTNELHREQTLAAIRAGKHVLCEKPLAMTLEDAREMVVAAREAGVVLGTNHHLRNAAAHRAMRDAIAEGRIGRPIAARVFHAVYLPPHLQGWRLERPEAGGGVILDITVHDADTLRFVLNDDPAEAVAISHSAGMGKEGVEDGVMGGVRFQSGVIAQFHDAFTTKFAETGFEVHGTEGSLIGRNVMTQKPVGTVTLRNAEGESQLPLDPANLYETALAAFHSAIEGHGQPSATGEDGVWSLATGLAVVKAAATGQAAEIETGL.

NADP(+)-binding positions include 9–12 (ASTI), 33–34 (ST), Arg38, 71–76 (TTNELH), 93–94 (EK), Asn120, 162–163 (WR), and Tyr283.

In terms of assembly, monomer.

It catalyses the reaction 1,5-anhydro-D-mannitol + NADP(+) = 1,5-anhydro-D-fructose + NADPH + H(+). Catalyzes the NADPH-specific reduction of 1,5-anhydro-D-fructose to 1,5-anhydro-D-mannitol. Also shows some activity against structurally related compounds such as 3-keto-1,5-anhydro-D-fructose, D-glucosone and D-xylosone. The enzyme cannot use NADH as cosubstrate. This is 1,5-anhydro-D-fructose reductase (afr) from Ensifer adhaerens (Sinorhizobium morelense).